A 335-amino-acid chain; its full sequence is MTEGNFVDYTKIYVSSGKGGKGSTHLHREKFIEKGGPDGGDGGRGGHVYLVGEKSLWTLFHLKFARHVKAGHGGDGGSSRSTGSDGEDKYIEVPLGTVVRDKETNEILFEITEHGEKRIIAEGGKGGLGNWHFRSSTNQTPRYSQPGLPAQEADIVLELKVLADVGLVGFPNAGKSTLLSVLTSAKPKIADYPFTTLKPNLGIVAYRDYQSFVIADIPGIIEGAAEGKGLGHYFLRHIERNSTLLFLVPADADDIKKEYDILLDELRRYNPEMLDKDRLIVVSKCDMLDEELQVEMKKQLDKDFAGIPYLFISSIAQQGLVELKDKLWAMLNVEA.

One can recognise an Obg domain in the interval 4–162 (GNFVDYTKIY…ADIVLELKVL (159 aa)). The OBG-type G domain occupies 163–332 (ADVGLVGFPN…LKDKLWAMLN (170 aa)). GTP-binding positions include 169–176 (GFPNAGKS), 194–198 (FTTLK), 216–219 (DIPG), 283–286 (SKCD), and 313–315 (SSI). Mg(2+) contacts are provided by serine 176 and threonine 196.

This sequence belongs to the TRAFAC class OBG-HflX-like GTPase superfamily. OBG GTPase family. In terms of assembly, monomer. It depends on Mg(2+) as a cofactor.

The protein resides in the cytoplasm. Its function is as follows. An essential GTPase which binds GTP, GDP and possibly (p)ppGpp with moderate affinity, with high nucleotide exchange rates and a fairly low GTP hydrolysis rate. Plays a role in control of the cell cycle, stress response, ribosome biogenesis and in those bacteria that undergo differentiation, in morphogenesis control. This is GTPase Obg from Flavobacterium psychrophilum (strain ATCC 49511 / DSM 21280 / CIP 103535 / JIP02/86).